The following is an 800-amino-acid chain: Integrin beta-5 (800 aa).

The N-terminal stretch at 1 to 24 (MPRAPALLFSCLLGLCALVPRLPG) is a signal peptide. Residues 25–722 (LNICTSGSAT…PECGTAPSAM (698 aa)) lie on the Extracellular side of the membrane. Residues 27-76 (ICTSGSATSCEECLLIHPKCAWCFKEDFGSLRSVTSRCDLKANLIRNGCG) enclose the PSI domain. 19 cysteine pairs are disulfide-bonded: cysteine 28-cysteine 46, cysteine 36-cysteine 463, cysteine 39-cysteine 64, cysteine 49-cysteine 75, cysteine 202-cysteine 211, cysteine 259-cysteine 300, cysteine 401-cysteine 413, cysteine 433-cysteine 461, cysteine 465-cysteine 484, cysteine 476-cysteine 487, cysteine 489-cysteine 498, cysteine 500-cysteine 530, cysteine 513-cysteine 528, cysteine 522-cysteine 533, cysteine 535-cysteine 548, cysteine 550-cysteine 571, cysteine 555-cysteine 569, cysteine 563-cysteine 574, and cysteine 576-cysteine 585. Residues 136–378 (YPVDLYYLMD…QLIINAYNSI (243 aa)) form the VWFA domain. 2 residues coordinate Mg(2+): serine 147 and serine 149. Positions 149, 152, 153, and 184 each coordinate Ca(2+). Ca(2+)-binding residues include asparagine 242, aspartate 244, proline 246, and glutamate 247. Glutamate 247 serves as a coordination point for Mg(2+). Asparagine 347 carries an N-linked (GlcNAc...) asparagine glycan. Glycine 362 lines the Ca(2+) pocket. I-EGF domains follow at residues 465–499 (CSAGLEPDSARCSSNGTYVCGLCECNPGYLGTRCE), 500–549 (CQEG…SFCE), 550–586 (CDNFSCARNKGVLCSGHGECHCGECKCHAGYIGDNCN), and 587–626 (CSTDISTCQARDGHICSDRGHCVCGQCQCTEPGAFGETCE). The N-linked (GlcNAc...) asparagine glycan is linked to asparagine 479. N-linked (GlcNAc...) asparagine glycosylation is present at asparagine 552. N-linked (GlcNAc...) asparagine glycosylation occurs at asparagine 586. 9 disulfide bridges follow: cysteine 587–cysteine 610, cysteine 594–cysteine 608, cysteine 602–cysteine 613, cysteine 615–cysteine 625, cysteine 628–cysteine 631, cysteine 635–cysteine 683, cysteine 641–cysteine 662, cysteine 644–cysteine 658, and cysteine 691–cysteine 715. N-linked (GlcNAc...) asparagine glycans are attached at residues asparagine 655 and asparagine 706. Residues 723–743 (TILLAVVGSILLTGFALLVIW) traverse the membrane as a helical segment. Over 744–800 (KLLVTIHDRREFAKFQSERSRARYEMASNPLYRKPISTHTVDFTFNKFNKSYNGTVD) the chain is Cytoplasmic. Serine 771 bears the Phosphoserine mark.

This sequence belongs to the integrin beta chain family. Heterodimer of an alpha and a beta subunit. Beta-5 (ITGB5) associates with alpha-V (ITGAV). Interacts with MYO10. Interacts with DAB2. Integrin ITGAV:ITGB5 interacts with FBLN5 (via N-terminus). ITGAV:ITGB5 interacts with CCN3. Interacts with tensin TNS3; TNS3 also interacts with PEAK1, thus acting as an adapter molecule to bridge the association of PEAK1 with ITGB5.

The protein resides in the cell membrane. Integrin alpha-V/beta-5 (ITGAV:ITGB5) is a receptor for fibronectin. It recognizes the sequence R-G-D in its ligand. The chain is Integrin beta-5 (ITGB5) from Bos taurus (Bovine).